The sequence spans 234 residues: Phosphoribosylaminoimidazole-succinocarboxamide synthase (234 aa).

It belongs to the SAICAR synthetase family.

It carries out the reaction 5-amino-1-(5-phospho-D-ribosyl)imidazole-4-carboxylate + L-aspartate + ATP = (2S)-2-[5-amino-1-(5-phospho-beta-D-ribosyl)imidazole-4-carboxamido]succinate + ADP + phosphate + 2 H(+). The protein operates within purine metabolism; IMP biosynthesis via de novo pathway; 5-amino-1-(5-phospho-D-ribosyl)imidazole-4-carboxamide from 5-amino-1-(5-phospho-D-ribosyl)imidazole-4-carboxylate: step 1/2. The protein is Phosphoribosylaminoimidazole-succinocarboxamide synthase of Streptococcus agalactiae serotype V (strain ATCC BAA-611 / 2603 V/R).